The sequence spans 501 residues: Aspartyl/glutamyl-tRNA(Asn/Gln) amidotransferase subunit B (501 aa).

The segment at Val-271–Phe-299 is disordered. The segment covering Arg-288–Phe-299 has biased composition (basic and acidic residues).

This sequence belongs to the GatB/GatE family. GatB subfamily. In terms of assembly, heterotrimer of A, B and C subunits.

The catalysed reaction is L-glutamyl-tRNA(Gln) + L-glutamine + ATP + H2O = L-glutaminyl-tRNA(Gln) + L-glutamate + ADP + phosphate + H(+). It carries out the reaction L-aspartyl-tRNA(Asn) + L-glutamine + ATP + H2O = L-asparaginyl-tRNA(Asn) + L-glutamate + ADP + phosphate + 2 H(+). Functionally, allows the formation of correctly charged Asn-tRNA(Asn) or Gln-tRNA(Gln) through the transamidation of misacylated Asp-tRNA(Asn) or Glu-tRNA(Gln) in organisms which lack either or both of asparaginyl-tRNA or glutaminyl-tRNA synthetases. The reaction takes place in the presence of glutamine and ATP through an activated phospho-Asp-tRNA(Asn) or phospho-Glu-tRNA(Gln). This chain is Aspartyl/glutamyl-tRNA(Asn/Gln) amidotransferase subunit B, found in Corynebacterium diphtheriae (strain ATCC 700971 / NCTC 13129 / Biotype gravis).